Reading from the N-terminus, the 144-residue chain is D-aminoacyl-tRNA deacylase (144 aa).

A Gly-cisPro motif, important for rejection of L-amino acids motif is present at residues 136-137 (GP).

It belongs to the DTD family. As to quaternary structure, homodimer.

It is found in the cytoplasm. The catalysed reaction is glycyl-tRNA(Ala) + H2O = tRNA(Ala) + glycine + H(+). The enzyme catalyses a D-aminoacyl-tRNA + H2O = a tRNA + a D-alpha-amino acid + H(+). Functionally, an aminoacyl-tRNA editing enzyme that deacylates mischarged D-aminoacyl-tRNAs. Also deacylates mischarged glycyl-tRNA(Ala), protecting cells against glycine mischarging by AlaRS. Acts via tRNA-based rather than protein-based catalysis; rejects L-amino acids rather than detecting D-amino acids in the active site. By recycling D-aminoacyl-tRNA to D-amino acids and free tRNA molecules, this enzyme counteracts the toxicity associated with the formation of D-aminoacyl-tRNA entities in vivo and helps enforce protein L-homochirality. The polypeptide is D-aminoacyl-tRNA deacylase (Haemophilus influenzae (strain PittGG)).